The sequence spans 861 residues: DNA mismatch repair protein MutS (861 aa).

Residue 618 to 625 (GPNMGGKS) participates in ATP binding.

The protein belongs to the DNA mismatch repair MutS family.

Functionally, this protein is involved in the repair of mismatches in DNA. It is possible that it carries out the mismatch recognition step. This protein has a weak ATPase activity. The polypeptide is DNA mismatch repair protein MutS (Shewanella sp. (strain MR-4)).